Consider the following 444-residue polypeptide: Acyl-CoA (8-3)-desaturase (444 aa).

At Met-1 the chain carries N-acetylmethionine. The Cytoplasmic segment spans residues 1 to 121; the sequence is MAPDPVAAET…FRELRATVER (121 aa). The 78-residue stretch at 17–94 folds into the Cytochrome b5 heme-binding domain; that stretch reads PRYFTWDEVA…MNSLLIGELS (78 aa). A helical transmembrane segment spans residues 122-142; that stretch reads MGLMKANHVFFLLYLLHILLL. The Lumenal segment spans residues 143–145; it reads DGA. Residues 146–170 form a helical membrane-spanning segment; that stretch reads AWLTLWVFGTSFLPFLLCAVLLSAV. At 171-267 the chain is on the cytoplasmic side; the sequence is QAQAGWLQHD…PYNHQHKYFF (97 aa). The Histidine box-1 motif lies at 179 to 183; the sequence is HDFGH. The short motif at 216–220 is the Histidine box-2 element; the sequence is HFQHH. Residues 268 to 288 form a helical membrane-spanning segment; it reads LIGPPALLPLYFQWYIFYFVI. Topologically, residues 289–305 are lumenal; sequence QRKKWVDLAWMITFYVR. Residues 306-326 form a helical membrane-spanning segment; sequence FFLTYVPLLGLKAFLGLFFIV. Residues 327–444 are Cytoplasmic-facing; sequence RFLESNWFVW…QLWLDAYLHQ (118 aa). The short motif at 382-386 is the Histidine box-3 element; that stretch reads QIEHH.

Belongs to the fatty acid desaturase type 1 family. Widely expressed, with highest levels in liver, brain, adrenal gland and heart. Highly expressed in fetal liver and brain.

It is found in the endoplasmic reticulum membrane. Its subcellular location is the mitochondrion. The enzyme catalyses (8Z,11Z,14Z)-eicosatrienoyl-CoA + 2 Fe(II)-[cytochrome b5] + O2 + 2 H(+) = (5Z,8Z,11Z,14Z)-eicosatetraenoyl-CoA + 2 Fe(III)-[cytochrome b5] + 2 H2O. It carries out the reaction (8Z,11Z,14Z,17Z)-eicosatetraenoyl-CoA + 2 Fe(II)-[cytochrome b5] + O2 + 2 H(+) = (5Z,8Z,11Z,14Z,17Z)-eicosapentaenoyl-CoA + 2 Fe(III)-[cytochrome b5] + 2 H2O. It catalyses the reaction (11E)-octadecenoyl-CoA + 2 Fe(II)-[cytochrome b5] + O2 + 2 H(+) = (5Z,11E)-octadecadienoyl-CoA + 2 Fe(III)-[cytochrome b5] + 2 H2O. Its pathway is lipid metabolism; polyunsaturated fatty acid biosynthesis. Its function is as follows. Acts as a front-end fatty acyl-coenzyme A (CoA) desaturase that introduces a cis double bond at carbon 5 located between a preexisting double bond and the carboxyl end of the fatty acyl chain. Involved in biosynthesis of highly unsaturated fatty acids (HUFA) from the essential polyunsaturated fatty acids (PUFA) linoleic acid (LA) (18:2n-6) and alpha-linolenic acid (ALA) (18:3n-3) precursors. Specifically, desaturates dihomo-gamma-linoleoate (DGLA) (20:3n-6) and eicosatetraenoate (ETA) (20:4n-3) to generate arachidonate (AA) (20:4n-6) and eicosapentaenoate (EPA) (20:5n-3), respectively. As a rate limiting enzyme for DGLA (20:3n-6) and AA (20:4n-6)-derived eicosanoid biosynthesis, controls the metabolism of inflammatory lipids like prostaglandin E2, critical for efficient acute inflammatory response and maintenance of epithelium homeostasis. Contributes to membrane phospholipid biosynthesis by providing AA (20:4n-6) as a major acyl chain esterified into phospholipids. In particular, regulates phosphatidylinositol-4,5-bisphosphate levels, modulating inflammatory cytokine production in T-cells. Also desaturates (11E)-octadecenoate (trans-vaccenoate)(18:1n-9), a metabolite in the biohydrogenation pathway of LA (18:2n-6). Does not exhibit any catalytic activity toward 20:3n-6, but it may enhance FADS2 activity. The chain is Acyl-CoA (8-3)-desaturase from Homo sapiens (Human).